Here is a 216-residue protein sequence, read N- to C-terminus: Protein-L-isoaspartate O-methyltransferase (216 aa).

Residue Ser65 is part of the active site.

This sequence belongs to the methyltransferase superfamily. L-isoaspartyl/D-aspartyl protein methyltransferase family.

The protein resides in the cytoplasm. It carries out the reaction [protein]-L-isoaspartate + S-adenosyl-L-methionine = [protein]-L-isoaspartate alpha-methyl ester + S-adenosyl-L-homocysteine. Functionally, catalyzes the methyl esterification of L-isoaspartyl residues in peptides and proteins that result from spontaneous decomposition of normal L-aspartyl and L-asparaginyl residues. It plays a role in the repair and/or degradation of damaged proteins. The sequence is that of Protein-L-isoaspartate O-methyltransferase from Chlorobium phaeobacteroides (strain DSM 266 / SMG 266 / 2430).